Here is a 201-residue protein sequence, read N- to C-terminus: Recombination protein RecR (201 aa).

The segment at 60–75 (CSVCGNIDTTDPCSIC) adopts a C4-type zinc-finger fold. Residues 83–178 (GTIIVVEDIS…KITRLAHGVP (96 aa)) enclose the Toprim domain.

This sequence belongs to the RecR family.

Functionally, may play a role in DNA repair. It seems to be involved in an RecBC-independent recombinational process of DNA repair. It may act with RecF and RecO. This is Recombination protein RecR from Bartonella bacilliformis (strain ATCC 35685 / KC583 / Herrer 020/F12,63).